Here is a 150-residue protein sequence, read N- to C-terminus: Cytochrome c oxidase subunit 5A, mitochondrial (150 aa).

A mitochondrion-targeting transit peptide spans 1–41 (MLGAALRRCAVAATTWAGPRGLLHSARTPGPAAAIQSVRCY). The SIFI-degron signature appears at 2-17 (LGAALRRCAVAATTWA). N6-acetyllysine occurs at positions 87 and 113. Thr-141 is modified (phosphothreonine).

Belongs to the cytochrome c oxidase subunit 5A family. As to quaternary structure, component of the cytochrome c oxidase (complex IV, CIV), a multisubunit enzyme composed of 14 subunits. The complex is composed of a catalytic core of 3 subunits MT-CO1, MT-CO2 and MT-CO3, encoded in the mitochondrial DNA, and 11 supernumerary subunits COX4I, COX5A, COX5B, COX6A, COX6B, COX6C, COX7A, COX7B, COX7C, COX8 and NDUFA4, which are encoded in the nuclear genome. The complex exists as a monomer or a dimer and forms supercomplexes (SCs) in the inner mitochondrial membrane with NADH-ubiquinone oxidoreductase (complex I, CI) and ubiquinol-cytochrome c oxidoreductase (cytochrome b-c1 complex, complex III, CIII), resulting in different assemblies (supercomplex SCI(1)III(2)IV(1) and megacomplex MCI(2)III(2)IV(2)). Interacts with AFG1L. Interacts with RAB5IF. Post-translationally, in response to mitochondrial stress, the precursor protein is ubiquitinated by the SIFI complex in the cytoplasm before mitochondrial import, leading to its degradation. Within the SIFI complex, UBR4 initiates ubiquitin chain that are further elongated or branched by KCMF1.

It localises to the mitochondrion inner membrane. The protein operates within energy metabolism; oxidative phosphorylation. In terms of biological role, component of the cytochrome c oxidase, the last enzyme in the mitochondrial electron transport chain which drives oxidative phosphorylation. The respiratory chain contains 3 multisubunit complexes succinate dehydrogenase (complex II, CII), ubiquinol-cytochrome c oxidoreductase (cytochrome b-c1 complex, complex III, CIII) and cytochrome c oxidase (complex IV, CIV), that cooperate to transfer electrons derived from NADH and succinate to molecular oxygen, creating an electrochemical gradient over the inner membrane that drives transmembrane transport and the ATP synthase. Cytochrome c oxidase is the component of the respiratory chain that catalyzes the reduction of oxygen to water. Electrons originating from reduced cytochrome c in the intermembrane space (IMS) are transferred via the dinuclear copper A center (CU(A)) of subunit 2 and heme A of subunit 1 to the active site in subunit 1, a binuclear center (BNC) formed by heme A3 and copper B (CU(B)). The BNC reduces molecular oxygen to 2 water molecules using 4 electrons from cytochrome c in the IMS and 4 protons from the mitochondrial matrix. The sequence is that of Cytochrome c oxidase subunit 5A, mitochondrial (COX5A) from Papio anubis (Olive baboon).